Consider the following 136-residue polypeptide: Large ribosomal subunit protein uL16c (136 aa).

The protein belongs to the universal ribosomal protein uL16 family. As to quaternary structure, part of the 50S ribosomal subunit.

The protein resides in the plastid. The protein localises to the chloroplast. The chain is Large ribosomal subunit protein uL16c from Zea mays (Maize).